A 214-amino-acid polypeptide reads, in one-letter code: MNLILFGPPGAGKGTQAQFLVETYGIPQISTGDMLRAAVKAGTPLGVKAQEIMIQGGLVSDDIVLGIVAERLAQDDCAAGFVLDGFPRTIPQADALSVILKQVGRAIDHVISLEVDGEEIVNRLSGRRSCSSCGKGYHLVFDPPLRAGVCDVCGSGLVQRADDQEETVRNRLLVYEQQTAPLKDYYRSRQVLCSIPGIGSIVEIQQRIAAALVE.

ATP is bound at residue 10–15 (GAGKGT). The NMP stretch occupies residues 30-59 (STGDMLRAAVKAGTPLGVKAQEIMIQGGLV). Residues T31, R36, 57–59 (GLV), 85–88 (GFPR), and Q92 contribute to the AMP site. Positions 126-163 (GRRSCSSCGKGYHLVFDPPLRAGVCDVCGSGLVQRADD) are LID. R127 provides a ligand contact to ATP. 4 residues coordinate Zn(2+): C130, C133, C150, and C153. 2 residues coordinate AMP: R160 and R171. G199 provides a ligand contact to ATP.

This sequence belongs to the adenylate kinase family. In terms of assembly, monomer.

Its subcellular location is the cytoplasm. It carries out the reaction AMP + ATP = 2 ADP. The protein operates within purine metabolism; AMP biosynthesis via salvage pathway; AMP from ADP: step 1/1. Its function is as follows. Catalyzes the reversible transfer of the terminal phosphate group between ATP and AMP. Plays an important role in cellular energy homeostasis and in adenine nucleotide metabolism. The chain is Adenylate kinase from Trichlorobacter lovleyi (strain ATCC BAA-1151 / DSM 17278 / SZ) (Geobacter lovleyi).